The following is a 571-amino-acid chain: Glycine--tRNA ligase (571 aa).

The substrate site is built by Arg-99 and Glu-165. ATP is bound by residues 197–199, 207–212, 324–325, and 443–446; these read RNE, IRLREF, EC, and GIDR. Residue 212 to 216 coordinates substrate; it reads FTQAE. 439–443 provides a ligand contact to substrate; the sequence is EPSFG.

It belongs to the class-II aminoacyl-tRNA synthetase family.

It is found in the cytoplasm. It carries out the reaction tRNA(Gly) + glycine + ATP = glycyl-tRNA(Gly) + AMP + diphosphate. Catalyzes the attachment of glycine to tRNA(Gly). The protein is Glycine--tRNA ligase of Pyrococcus abyssi (strain GE5 / Orsay).